A 2155-amino-acid chain; its full sequence is Alpha-tectorin (2155 aa).

The first 22 residues, M1–A22, serve as a signal peptide directing secretion. N-linked (GlcNAc...) asparagine glycosylation is found at N34, N187, N215, N278, N455, N506, N528, and N560. The 155-residue stretch at P98–K252 folds into the NIDO domain. A VWFC domain is found at C260–C314. Residues S320–D500 form the VWFD 1 domain. Intrachain disulfides connect C322-C461 and C344-C499. The region spanning C597–C650 is the TIL 1 domain. Residues N670, N687, N813, N843, N855, N898, N920, N931, and N949 are each glycosylated (N-linked (GlcNAc...) asparagine). Residues T711–N886 form the VWFD 2 domain. Residues C713 and C849 are joined by a disulfide bond. One can recognise a TIL 2 domain in the interval C984–C1036. N-linked (GlcNAc...) asparagine glycosylation is found at N1048, N1235, and N1364. Residues A1098 to Q1278 form the VWFD 3 domain. 2 disulfide bridges follow: C1100–C1241 and C1122–C1277. The region spanning C1372–C1425 is the TIL 3 domain. Residues S1485–N1666 form the VWFD 4 domain. Cystine bridges form between C1487-C1622, C1509-C1665, C1717-C1775, C1741-C1784, C1786-C1818, C1806-C1898, and C1837-C1857. Residues N1538, N1565, N1756, N1772, N1794, N1851, N1864, N1880, N1920, and N1939 are each glycosylated (N-linked (GlcNAc...) asparagine). Residues T1805–N2059 enclose the ZP domain. Disulfide bonds link C1980–C2040, C2001–C2056, and C2045–C2052. N2091 is lipidated: GPI-anchor amidated asparagine. Residues G2092–S2155 constitute a propeptide, removed in mature form.

May form homomeric filament after self-association or heteromeric filament after association with beta-tectorin. Interacts with CEACAM16. The presence of a hydrophobic C-terminus preceded by a potential cleavage site strongly suggests that tectorins are synthesized as glycosylphosphatidylinositol-linked, membrane-bound precursors. Tectorins are targeted to the apical surface of the inner ear epithelia by the lipid and proteolytically released into the extracellular compartment.

It localises to the cell membrane. Its subcellular location is the secreted. The protein resides in the extracellular space. It is found in the extracellular matrix. Its function is as follows. One of the major non-collagenous components of the tectorial membrane. The tectorial membrane is an extracellular matrix of the inner ear that covers the neuroepithelium of the cochlea and contacts the stereocilia bundles of specialized sensory hair cells. Sound induces movement of these hair cells relative to the tectorial membrane, deflects the stereocilia and leads to fluctuations in hair-cell membrane potential, transducing sound into electrical signals. The sequence is that of Alpha-tectorin (TECTA) from Homo sapiens (Human).